We begin with the raw amino-acid sequence, 135 residues long: Large ribosomal subunit protein eL27y (135 aa).

The protein belongs to the eukaryotic ribosomal protein eL27 family.

This chain is Large ribosomal subunit protein eL27y (RPL27B), found in Arabidopsis thaliana (Mouse-ear cress).